A 94-amino-acid chain; its full sequence is Co-chaperonin GroES (94 aa).

Belongs to the GroES chaperonin family. As to quaternary structure, heptamer of 7 subunits arranged in a ring. Interacts with the chaperonin GroEL.

It localises to the cytoplasm. Together with the chaperonin GroEL, plays an essential role in assisting protein folding. The GroEL-GroES system forms a nano-cage that allows encapsulation of the non-native substrate proteins and provides a physical environment optimized to promote and accelerate protein folding. GroES binds to the apical surface of the GroEL ring, thereby capping the opening of the GroEL channel. This chain is Co-chaperonin GroES, found in Clostridium botulinum (strain Alaska E43 / Type E3).